Consider the following 326-residue polypeptide: MVSDNEMGLVLAVSSSVFIGSSFILKKKGLKRAAANGTRAGFGGYTYLLEPLWWVGLVTMTFGEIANFVAYVYAPAVLVTPLGALSIIISAVLAHFLLDEKLRKMGVWGCVCCIVGSVMIVIHAPQEQTPNSVEEIWKLAMQPAFLIYVAISMSIVLALILYCEPLCGQTNILVYIGICSLMGSLTVMSIKAVGIAIKLTFEGINQIWYPETWFFAMVAAICVVMQMIYLNKALDTFNAAIVSPIYYVMFTTLTIVASAIMFKDWNGQNTDSIASEICGFITVLTGTVILHSTREEEQASPRRMRWQDSGKSFDEEHLTSLYSPEY.

Residues 1 to 4 (MVSD) lie on the Extracellular side of the membrane. The chain crosses the membrane as a helical span at residues 5-25 (NEMGLVLAVSSSVFIGSSFIL). Over 26 to 51 (KKKGLKRAAANGTRAGFGGYTYLLEP) the chain is Cytoplasmic. Residues 52–72 (LWWVGLVTMTFGEIANFVAYV) traverse the membrane as a helical segment. Over 73–76 (YAPA) the chain is Extracellular. Residues 77-97 (VLVTPLGALSIIISAVLAHFL) form a helical membrane-spanning segment. At 98–104 (LDEKLRK) the chain is on the cytoplasmic side. The chain crosses the membrane as a helical span at residues 105–125 (MGVWGCVCCIVGSVMIVIHAP). Residues 126-142 (QEQTPNSVEEIWKLAMQ) lie on the Extracellular side of the membrane. Residues 143 to 163 (PAFLIYVAISMSIVLALILYC) form a helical membrane-spanning segment. The Cytoplasmic portion of the chain corresponds to 164–169 (EPLCGQ). The helical transmembrane segment at 170-190 (TNILVYIGICSLMGSLTVMSI) threads the bilayer. Residues 191–209 (KAVGIAIKLTFEGINQIWY) lie on the Extracellular side of the membrane. The chain crosses the membrane as a helical span at residues 210–230 (PETWFFAMVAAICVVMQMIYL). Residues 231–240 (NKALDTFNAA) are Cytoplasmic-facing. A helical transmembrane segment spans residues 241–261 (IVSPIYYVMFTTLTIVASAIM). The Extracellular segment spans residues 262 to 272 (FKDWNGQNTDS). A helical membrane pass occupies residues 273 to 293 (IASEICGFITVLTGTVILHST). Residues 294 to 326 (REEEQASPRRMRWQDSGKSFDEEHLTSLYSPEY) lie on the Cytoplasmic side of the membrane.

The protein belongs to the NIPA (TC 2.A.7) family. In terms of assembly, homodimer.

The protein localises to the cell membrane. The protein resides in the early endosome. Acts as a Mg(2+) transporter. Can also transport other divalent cations such as Fe(2+), Sr(2+), Ba(2+), Mn(2+) and Co(2+) but to a much less extent than Mg(2+). The protein is Probable magnesium transporter NIPA7 of Arabidopsis thaliana (Mouse-ear cress).